The primary structure comprises 626 residues: tRNA uridine 5-carboxymethylaminomethyl modification enzyme MnmG (626 aa).

FAD is bound at residue 13 to 18; that stretch reads GGGHAG. 273–287 is a binding site for NAD(+); that stretch reads GPRYCPSIEDKIHRF.

It belongs to the MnmG family. As to quaternary structure, homodimer. Heterotetramer of two MnmE and two MnmG subunits. The cofactor is FAD.

The protein resides in the cytoplasm. NAD-binding protein involved in the addition of a carboxymethylaminomethyl (cmnm) group at the wobble position (U34) of certain tRNAs, forming tRNA-cmnm(5)s(2)U34. This is tRNA uridine 5-carboxymethylaminomethyl modification enzyme MnmG from Acinetobacter baumannii (strain AB307-0294).